Consider the following 508-residue polypeptide: ATP synthase subunit alpha (508 aa).

169 to 176 (GDRGTGKS) is an ATP binding site.

This sequence belongs to the ATPase alpha/beta chains family. As to quaternary structure, F-type ATPases have 2 components, CF(1) - the catalytic core - and CF(0) - the membrane proton channel. CF(1) has five subunits: alpha(3), beta(3), gamma(1), delta(1), epsilon(1). CF(0) has three main subunits: a(1), b(2) and c(9-12). The alpha and beta chains form an alternating ring which encloses part of the gamma chain. CF(1) is attached to CF(0) by a central stalk formed by the gamma and epsilon chains, while a peripheral stalk is formed by the delta and b chains.

The protein localises to the cell membrane. The catalysed reaction is ATP + H2O + 4 H(+)(in) = ADP + phosphate + 5 H(+)(out). Produces ATP from ADP in the presence of a proton gradient across the membrane. The alpha chain is a regulatory subunit. This chain is ATP synthase subunit alpha, found in Natranaerobius thermophilus (strain ATCC BAA-1301 / DSM 18059 / JW/NM-WN-LF).